We begin with the raw amino-acid sequence, 172 residues long: Shikimate kinase (172 aa).

14 to 19 (GAGKST) lines the ATP pocket. Serine 18 is a binding site for Mg(2+). Residues aspartate 36, arginine 60, and glycine 82 each contribute to the substrate site. Arginine 120 is an ATP binding site. Arginine 140 contributes to the substrate binding site. Glutamine 157 contacts ATP.

This sequence belongs to the shikimate kinase family. Monomer. It depends on Mg(2+) as a cofactor.

The protein resides in the cytoplasm. The catalysed reaction is shikimate + ATP = 3-phosphoshikimate + ADP + H(+). Its pathway is metabolic intermediate biosynthesis; chorismate biosynthesis; chorismate from D-erythrose 4-phosphate and phosphoenolpyruvate: step 5/7. In terms of biological role, catalyzes the specific phosphorylation of the 3-hydroxyl group of shikimic acid using ATP as a cosubstrate. The sequence is that of Shikimate kinase from Colwellia psychrerythraea (strain 34H / ATCC BAA-681) (Vibrio psychroerythus).